Here is a 510-residue protein sequence, read N- to C-terminus: Inositol-3-phosphate synthase isozyme 2 (510 aa).

It belongs to the myo-inositol 1-phosphate synthase family. NAD(+) serves as cofactor. As to expression, expressed in siliques, leaves, roots, seed endosperm, but not in embryos. Highest expression in seeds. In leaves, only expressed in hydathodes and vascular tissue.

It is found in the cytoplasm. It catalyses the reaction D-glucose 6-phosphate = 1D-myo-inositol 3-phosphate. It participates in polyol metabolism; myo-inositol biosynthesis; myo-inositol from D-glucose 6-phosphate: step 1/2. In terms of biological role, key enzyme in myo-inositol biosynthesis pathway that catalyzes the conversion of glucose 6-phosphate to 1-myo-inositol 1-phosphate in a NAD-dependent manner. This Arabidopsis thaliana (Mouse-ear cress) protein is Inositol-3-phosphate synthase isozyme 2 (IPS2).